The following is a 254-amino-acid chain: Nickel import ATP-binding protein NikD (254 aa).

An ABC transporter domain is found at 2 to 241 (PQQIELRNIA…PKHAVTRSLV (240 aa)). 36 to 43 (GGSGSGKS) lines the ATP pocket.

The protein belongs to the ABC transporter superfamily. Nickel importer (TC 3.A.1.5.3) family. As to quaternary structure, the complex is composed of two ATP-binding proteins (NikD and NikE), two transmembrane proteins (NikB and NikC) and a solute-binding protein (NikA).

It localises to the cell inner membrane. The catalysed reaction is Ni(2+)(out) + ATP + H2O = Ni(2+)(in) + ADP + phosphate + H(+). Its function is as follows. Part of the ABC transporter complex NikABCDE involved in nickel import. Responsible for energy coupling to the transport system. This chain is Nickel import ATP-binding protein NikD, found in Shigella sonnei (strain Ss046).